A 475-amino-acid chain; its full sequence is Cobyric acid synthase (475 aa).

The 188-residue stretch at 244-431 folds into the GATase cobBQ-type domain; it reads KLNVVVPVLT…LHGFFDEADV (188 aa). The active-site Nucleophile is Cys325. His423 is an active-site residue.

This sequence belongs to the CobB/CobQ family. CobQ subfamily.

It functions in the pathway cofactor biosynthesis; adenosylcobalamin biosynthesis. In terms of biological role, catalyzes amidations at positions B, D, E, and G on adenosylcobyrinic A,C-diamide. NH(2) groups are provided by glutamine, and one molecule of ATP is hydrogenolyzed for each amidation. In Vibrio campbellii (strain ATCC BAA-1116), this protein is Cobyric acid synthase.